A 175-amino-acid chain; its full sequence is ATP synthase subunit b (175 aa).

The chain crosses the membrane as a helical span at residues leucine 20–tryptophan 40.

Belongs to the ATPase B chain family. As to quaternary structure, F-type ATPases have 2 components, F(1) - the catalytic core - and F(0) - the membrane proton channel. F(1) has five subunits: alpha(3), beta(3), gamma(1), delta(1), epsilon(1). F(0) has four main subunits: a(1), b(2) and c(10-14). The alpha and beta chains form an alternating ring which encloses part of the gamma chain. F(1) is attached to F(0) by a central stalk formed by the gamma and epsilon chains, while a peripheral stalk is formed by the delta and b chains.

Its subcellular location is the cell inner membrane. F(1)F(0) ATP synthase produces ATP from ADP in the presence of a proton or sodium gradient. F-type ATPases consist of two structural domains, F(1) containing the extramembraneous catalytic core and F(0) containing the membrane proton channel, linked together by a central stalk and a peripheral stalk. During catalysis, ATP synthesis in the catalytic domain of F(1) is coupled via a rotary mechanism of the central stalk subunits to proton translocation. Its function is as follows. Component of the F(0) channel, it forms part of the peripheral stalk, linking F(1) to F(0). This is ATP synthase subunit b from Chlorobaculum parvum (strain DSM 263 / NCIMB 8327) (Chlorobium vibrioforme subsp. thiosulfatophilum).